The sequence spans 1368 residues: DNA-directed RNA polymerase subunit beta (1368 aa).

It belongs to the RNA polymerase beta chain family. In terms of assembly, the RNAP catalytic core consists of 2 alpha, 1 beta, 1 beta' and 1 omega subunit. When a sigma factor is associated with the core the holoenzyme is formed, which can initiate transcription.

The enzyme catalyses RNA(n) + a ribonucleoside 5'-triphosphate = RNA(n+1) + diphosphate. In terms of biological role, DNA-dependent RNA polymerase catalyzes the transcription of DNA into RNA using the four ribonucleoside triphosphates as substrates. This chain is DNA-directed RNA polymerase subunit beta, found in Paraburkholderia xenovorans (strain LB400).